The primary structure comprises 235 residues: Homeobox-leucine zipper protein ATHB-12 (235 aa).

Residues 27–86 (KSNNQKRFSEEQIKSLELIFESETRLEPRKKVQVARELGLQPRQVAIWFQNKRARWKTKQ) constitute a DNA-binding region (homeobox). Positions 87-122 (LEKEYNTLRANYNNLASQFEIMKKEKQSLVSELQRL) are leucine-zipper. Basic and acidic residues-rich tracts occupy residues 128 to 138 (RPKEEKHHECC) and 152 to 162 (HNGKSEPEGRL). The disordered stretch occupies residues 128–167 (RPKEEKHHECCGDQGLALSSSTESHNGKSEPEGRLDQGSV).

The protein belongs to the HD-ZIP homeobox family. Class I subfamily. In terms of assembly, interacts with TFIIB1. In terms of tissue distribution, widely expressed.

Its subcellular location is the nucleus. Probable transcription activator that may act as growth regulators in response to water deficit. The protein is Homeobox-leucine zipper protein ATHB-12 (ATHB-12) of Arabidopsis thaliana (Mouse-ear cress).